Here is a 471-residue protein sequence, read N- to C-terminus: UDP-N-acetylmuramate--L-alanine ligase (471 aa).

114-120 contacts ATP; it reads GTHGKTT.

It belongs to the MurCDEF family.

It localises to the cytoplasm. The catalysed reaction is UDP-N-acetyl-alpha-D-muramate + L-alanine + ATP = UDP-N-acetyl-alpha-D-muramoyl-L-alanine + ADP + phosphate + H(+). It participates in cell wall biogenesis; peptidoglycan biosynthesis. Its function is as follows. Cell wall formation. The polypeptide is UDP-N-acetylmuramate--L-alanine ligase (Rhizobium meliloti (strain 1021) (Ensifer meliloti)).